The following is a 129-amino-acid chain: Glycine cleavage system H protein (129 aa).

The Lipoyl-binding domain maps to 24-106 (TYTVGITEHA…YAGGWIFKIK (83 aa)). Lys65 bears the N6-lipoyllysine mark.

This sequence belongs to the GcvH family. As to quaternary structure, the glycine cleavage system is composed of four proteins: P, T, L and H. Requires (R)-lipoate as cofactor.

In terms of biological role, the glycine cleavage system catalyzes the degradation of glycine. The H protein shuttles the methylamine group of glycine from the P protein to the T protein. This chain is Glycine cleavage system H protein, found in Escherichia coli O7:K1 (strain IAI39 / ExPEC).